A 109-amino-acid polypeptide reads, in one-letter code: Iron-sulfur cluster assembly protein CyaY (109 aa).

It belongs to the frataxin family.

Involved in iron-sulfur (Fe-S) cluster assembly. May act as a regulator of Fe-S biogenesis. The protein is Iron-sulfur cluster assembly protein CyaY of Shewanella putrefaciens (strain CN-32 / ATCC BAA-453).